The chain runs to 150 residues: Oleosin Ara h 10.0102 (150 aa).

A run of 2 helical transmembrane segments spans residues 39–59 (VIAV…AGLA) and 73–93 (LFIL…LSVA).

It belongs to the oleosin family. As to expression, expressed in seeds (at protein level).

It localises to the lipid droplet. The protein resides in the membrane. May have a structural role to stabilize the lipid body during desiccation of the seed by preventing coalescence of the oil. Probably interacts with both lipid and phospholipid moieties of lipid bodies. May also provide recognition signals for specific lipase anchorage in lipolysis during seedling growth. The protein is Oleosin Ara h 10.0102 of Arachis hypogaea (Peanut).